The sequence spans 156 residues: Protein OXIDATIVE STRESS 3 LIKE 3 (156 aa).

Positions 1-67 are disordered; sequence MHYQEQMESL…GLSKHYKGKS (67 aa). Residues 13 to 26 show a composition bias toward basic and acidic residues; it reads GEERRRGNYTRDVD.

It localises to the nucleus. Promotes slightly the tolerance to oxidizing chemicals (e.g. diamide). The polypeptide is Protein OXIDATIVE STRESS 3 LIKE 3 (Arabidopsis thaliana (Mouse-ear cress)).